The sequence spans 547 residues: Undecaprenyl phosphate-alpha-4-amino-4-deoxy-L-arabinose arabinosyl transferase (547 aa).

The next 11 membrane-spanning stretches (helical) occupy residues 1 to 21 (MKLT…LPLD), 83 to 103 (FASA…ALQL), 111 to 131 (FLAG…TYSV), 174 to 194 (FLTK…PYVI), 205 to 225 (FGPL…IAVH), 253 to 273 (APFW…LGLL), 286 to 306 (ISPE…FFSV), 311 to 331 (LLTY…ASAV), 346 to 366 (AWLN…LALS), 378 to 398 (GALA…FIQL), and 408 to 428 (SALC…QSLI).

This sequence belongs to the glycosyltransferase 83 family.

It is found in the cell inner membrane. The enzyme catalyses 4-amino-4-deoxy-alpha-L-arabinopyranosyl di-trans,octa-cis-undecaprenyl phosphate + lipid IVA = lipid IIA + di-trans,octa-cis-undecaprenyl phosphate.. Its pathway is lipopolysaccharide metabolism; 4-amino-4-deoxy-beta-L-arabinose-lipid A biosynthesis. Functionally, catalyzes the transfer of the L-Ara4N moiety of the glycolipid undecaprenyl phosphate-alpha-L-Ara4N to lipid A. The modified arabinose is attached to lipid A and is required for resistance to polymyxin and cationic antimicrobial peptides. This chain is Undecaprenyl phosphate-alpha-4-amino-4-deoxy-L-arabinose arabinosyl transferase, found in Aeromonas salmonicida (strain A449).